The primary structure comprises 722 residues: A-type ATP synthase subunit I (722 aa).

The span at Asp-309–Ala-321 shows a compositional bias: basic and acidic residues. A disordered region spans residues Asp-309 to Pro-352. The segment covering Asp-326–Ala-335 has biased composition (low complexity). The next 8 membrane-spanning stretches (helical) occupy residues Phe-384–Trp-404, Gly-419–Phe-439, Leu-474–Val-494, Ala-505–Ser-525, Leu-554–Leu-574, Ile-590–Gly-610, Phe-639–Gly-659, and Gly-662–Val-682.

The protein belongs to the V-ATPase 116 kDa subunit family. As to quaternary structure, has multiple subunits with at least A(3), B(3), C, D, E, F, H, I and proteolipid K(x).

The protein resides in the cell membrane. Component of the A-type ATP synthase that produces ATP from ADP in the presence of a proton gradient across the membrane. The sequence is that of A-type ATP synthase subunit I from Halobacterium salinarum (strain ATCC 700922 / JCM 11081 / NRC-1) (Halobacterium halobium).